Consider the following 150-residue polypeptide: uncharacterized protein (150 aa).

Residues 1–22 (MVIALKRFSFLASIATLTVLNA) form the signal peptide. The N-palmitoyl cysteine moiety is linked to residue Cys-23. Cys-23 carries the S-diacylglycerol cysteine lipid modification.

The protein belongs to the MG067/MG068/MG395 family.

It is found in the cell membrane. This is an uncharacterized protein from Mycoplasma pneumoniae (strain ATCC 29342 / M129 / Subtype 1) (Mycoplasmoides pneumoniae).